Consider the following 1142-residue polypeptide: SNF1-activating kinase 1 (1142 aa).

A disordered region spans residues Glu22–Ser41. Phosphothreonine is present on Thr43. The segment covering Gln82–Lys93 has biased composition (polar residues). The tract at residues Gln82–Ser107 is disordered. Positions Thr94–Ser107 are enriched in low complexity. A Protein kinase domain is found at Tyr133 to Val448. ATP-binding positions include Leu139–Val147 and Lys162. Catalysis depends on Asp277, which acts as the Proton acceptor. Disordered regions lie at residues Ser634–Gln678, Asn694–Ile799, Ser825–Glu875, Lys919–Ser971, Ser1005–Thr1027, and Ser1066–Pro1142. Positions Ser640–Leu656 are enriched in polar residues. The span at Asn694 to Ser706 shows a compositional bias: low complexity. Residues Tyr707–Leu741 are compositionally biased toward polar residues. Basic and acidic residues predominate over residues Thr742 to Glu751. A compositionally biased stretch (polar residues) spans Asn785 to Ile799. 2 stretches are compositionally biased toward low complexity: residues Ser835–Ser868 and Ser920–Ser936. Polar residues predominate over residues Ser958–Ser971. Ser964 bears the Phosphoserine mark. Positions Asn1096–Gln1111 are enriched in basic and acidic residues. Ser1126 is subject to Phosphoserine. Basic and acidic residues predominate over residues Asn1133–Pro1142.

This sequence belongs to the protein kinase superfamily. Ser/Thr protein kinase family. As to quaternary structure, associates with the SNF1 kinase complex. Interacts with SNF1 and REG1. Post-translationally, autophosphorylated.

The protein resides in the cytoplasm. It carries out the reaction L-seryl-[protein] + ATP = O-phospho-L-seryl-[protein] + ADP + H(+). It catalyses the reaction L-threonyl-[protein] + ATP = O-phospho-L-threonyl-[protein] + ADP + H(+). Functionally, serine/threonine-protein kinase that phosphorylates SNF1, the catalytic subunit of the SNF1 kinase complex. Acts as an activator of the SNF1 kinase complex and controls its nuclear localization upon glucose and nitrogen depletion. Also required for SNF1 kinase activation under other stress conditions like alkaline pH or presence of cadmium. The protein is SNF1-activating kinase 1 (SAK1) of Saccharomyces cerevisiae (strain ATCC 204508 / S288c) (Baker's yeast).